A 248-amino-acid polypeptide reads, in one-letter code: Acetylglutamate kinase (248 aa).

Substrate-binding positions include 36–37, arginine 58, and asparagine 147; that span reads GG.

This sequence belongs to the acetylglutamate kinase family. ArgB subfamily.

The protein localises to the cytoplasm. It catalyses the reaction N-acetyl-L-glutamate + ATP = N-acetyl-L-glutamyl 5-phosphate + ADP. The protein operates within amino-acid biosynthesis; L-arginine biosynthesis; N(2)-acetyl-L-ornithine from L-glutamate: step 2/4. In terms of biological role, catalyzes the ATP-dependent phosphorylation of N-acetyl-L-glutamate. The sequence is that of Acetylglutamate kinase from Thermus thermophilus (strain ATCC BAA-163 / DSM 7039 / HB27).